The chain runs to 343 residues: Anthranilate phosphoribosyltransferase (343 aa).

5-phospho-alpha-D-ribose 1-diphosphate contacts are provided by residues G77, 80 to 81, T85, 87 to 90, 105 to 113, and S117; these read GD, NVST, and KHGNRSSSG. G77 contributes to the anthranilate binding site. S89 is a binding site for Mg(2+). N108 lines the anthranilate pocket. R163 provides a ligand contact to anthranilate. 2 residues coordinate Mg(2+): D222 and E223.

It belongs to the anthranilate phosphoribosyltransferase family. As to quaternary structure, homodimer. Requires Mg(2+) as cofactor.

The enzyme catalyses N-(5-phospho-beta-D-ribosyl)anthranilate + diphosphate = 5-phospho-alpha-D-ribose 1-diphosphate + anthranilate. It functions in the pathway amino-acid biosynthesis; L-tryptophan biosynthesis; L-tryptophan from chorismate: step 2/5. In terms of biological role, catalyzes the transfer of the phosphoribosyl group of 5-phosphorylribose-1-pyrophosphate (PRPP) to anthranilate to yield N-(5'-phosphoribosyl)-anthranilate (PRA). The sequence is that of Anthranilate phosphoribosyltransferase from Cenarchaeum symbiosum (strain A).